Reading from the N-terminus, the 388-residue chain is CUE domain-containing protein 1 (388 aa).

Residues 1–10 (MTSLFRRSSS) show a composition bias toward low complexity. The interval 1–45 (MTSLFRRSSSGSGGGGATGARGAGTGAGDGSTAPQELNNSRPARQ) is disordered. Residues 11 to 29 (GSGGGGATGARGAGTGAGD) are compositionally biased toward gly residues. The region spanning 50 to 93 (EFNQAMDDFKTMFPNMDYDIIECVLRANSGAVDATIDQLLQMNL) is the CUE domain. Disordered stretches follow at residues 152–178 (PTPP…WNPP), 196–225 (DSIQ…ACDQ), 270–302 (SQKS…TVSE), and 369–388 (DFRG…REGQ). A compositionally biased stretch (polar residues) spans 290–300 (VPGTSETNPTV).

This chain is CUE domain-containing protein 1 (Cuedc1), found in Mus musculus (Mouse).